A 258-amino-acid polypeptide reads, in one-letter code: Acyl-[acyl-carrier-protein]--UDP-N-acetylglucosamine O-acyltransferase (258 aa).

This sequence belongs to the transferase hexapeptide repeat family. LpxA subfamily. In terms of assembly, homotrimer.

It is found in the cytoplasm. It carries out the reaction a (3R)-hydroxyacyl-[ACP] + UDP-N-acetyl-alpha-D-glucosamine = a UDP-3-O-[(3R)-3-hydroxyacyl]-N-acetyl-alpha-D-glucosamine + holo-[ACP]. It functions in the pathway glycolipid biosynthesis; lipid IV(A) biosynthesis; lipid IV(A) from (3R)-3-hydroxytetradecanoyl-[acyl-carrier-protein] and UDP-N-acetyl-alpha-D-glucosamine: step 1/6. In terms of biological role, involved in the biosynthesis of lipid A, a phosphorylated glycolipid that anchors the lipopolysaccharide to the outer membrane of the cell. The chain is Acyl-[acyl-carrier-protein]--UDP-N-acetylglucosamine O-acyltransferase from Neisseria meningitidis serogroup C / serotype 2a (strain ATCC 700532 / DSM 15464 / FAM18).